Reading from the N-terminus, the 1076-residue chain is Regulator of G-protein signaling protein-like (1076 aa).

The 120-residue stretch at 645-764 (NLTEVLLNTQ…LFPPHHQEVE (120 aa)) folds into the RGS domain. Polar residues predominate over residues 834–852 (TTAHNTSGRSAPPSTNVRS). Residues 834 to 854 (TTAHNTSGRSAPPSTNVRSAD) are disordered. The helical transmembrane segment at 960–982 (VFHGAIMSVFPVVMYFWKRFCFW) threads the bilayer.

The protein localises to the membrane. The chain is Regulator of G-protein signaling protein-like (RGSL1) from Homo sapiens (Human).